Consider the following 7126-residue polypeptide: Replicase polyprotein 1ab (7126 aa).

The region spanning 25-151 is the CoV Nsp1 globular domain; sequence RSDHVACTVP…EHTFLLRKNG (127 aa). Positions 167-195 constitute a BetaCoV Nsp1 C-terminal domain; sequence TPYVEILDDLEADPTGKYSQNLLKKLIGG. One can recognise a CoV Nsp2 N-terminal domain in the interval 197 to 472; it reads CIPVDQYMCG…WDKVVETANL (276 aa). Zn(2+) is bound by residues Cys339, Cys342, Cys358, and Cys360. The interval 339 to 360 is C4; that stretch reads CNACGRGTWCTGNAIQGFACDC. Positions 478–712 constitute a CoV Nsp2 middle domain; sequence QHSLNFCQQF…LDIMSKAMKL (235 aa). In terms of domain architecture, CoV Nsp2 C-terminal spans 714 to 847; it reads HTNVSWAGTK…VSTLFRLKGG (134 aa). In terms of domain architecture, Ubiquitin-like 1 spans 851 to 960; that stretch reads KKVTFGDVNT…MTFSINPVED (110 aa). The segment at 1039–1061 is disordered; the sequence is AQEPSVESTDSTPSTSTVVSEND. Over residues 1041-1059 the composition is skewed to low complexity; that stretch reads EPSVESTDSTPSTSTVVSE. Macro domains follow at residues 1159 to 1328 and 1329 to 1453; these read DLSK…KPDG and LVYS…AIQT. The region spanning 1453 to 1526 is the DPUP domain; sequence TPETAFINNV…LEACRAYLTS (74 aa). The 56-residue stretch at 1531 to 1586 folds into the Ubiquitin-like 2 domain; sequence QVNIEVLVTIDGVNFRTVILNDATTFRKQLGATFYKGVDISDALPTVKMGGESLFV. The Peptidase C16 domain occupies 1600 to 1871; sequence EYYGTSDVTF…KVEVNPDLSN (272 aa). Catalysis depends on Cys1641, which acts as the For PL-PRO activity. Zn(2+) is bound by residues Cys1721, Cys1724, Cys1756, and Cys1758. The C4-type zinc finger occupies 1721-1758; it reads CTVCGIRDIEYTGMRACVYAGVNSMEELQSVFNETCVC. Residues His1807 and Asp1822 each act as for PL-PRO activity in the active site. In terms of domain architecture, Nucleic acid-binding spans 1885–2002; the sequence is TIKYSPATIL…QLYDVAPIVL (118 aa). Residues 2019–2140 form the G2M domain; it reads PNVPVVEDVS…AKITVTATTA (122 aa). 3 helical membrane-spanning segments follow: residues 2119-2139, 2152-2172, and 2229-2249; these read VLLG…TATT, FVVN…LFFL, and LFLL…LVIF. The tract at residues 2119-2402 is HD1; the sequence is VLLGASSLFA…VTHIPLHGLV (284 aa). A 3Ecto domain is found at 2266-2332; sequence LAMYKEVRSY…LQMLQTHITS (67 aa). 2 disulfide bridges follow: Cys2282–Cys2310 and Cys2300–Cys2307. 3 consecutive transmembrane segments (helical) span residues 2333-2353, 2357-2377, and 2382-2402; these read YVLN…YVLY, FNVL…SAFV, and YNYI…HGLV. The Y1 stretch occupies residues 2416–2506; sequence KFYSHVINGC…TLRRLIKPTD (91 aa). One can recognise a CoV Nsp3 Y domain in the interval 2416 to 2789; sequence KFYSHVINGC…LSVKFSATKI (374 aa). Zn(2+) is bound by residues His2420, Cys2425, Cys2430, Cys2433, Cys2466, His2469, Cys2473, and Cys2476. The tract at residues 2420–2433 is ZF1; it reads HVINGCKDTACLLC. A ZF2 region spans residues 2466-2476; sequence CCKHNWNCVEC. A Y2 region spans residues 2507 to 2605; the sequence is QSHYYVDSVV…LVDVNLVTTV (99 aa). The interval 2507–2789 is coV-Y; that stretch reads QSHYYVDSVV…LSVKFSATKI (283 aa). The interval 2606 to 2688 is Y3; sequence GDSREIAIKM…DALQYAHKND (83 aa). The tract at residues 2689–2789 is Y4; that stretch reads IQLTTECYNN…LSVKFSATKI (101 aa). A run of 4 helical transmembrane segments spans residues 2807-2827, 3079-3099, 3112-3132, and 3156-3176; these read GYCI…FCLP, STSL…FYYI, CAVV…FIVA, and AFIM…IWML. Positions 2807-3176 are HD2; sequence GYCILTLFVF…FGTVVPIWML (370 aa). One can recognise a Nsp4C domain in the interval 3202–3298; the sequence is VFTDGKLNCS…NCSVTSSVLQ (97 aa). One can recognise a Peptidase C30 domain in the interval 3299 to 3604; that stretch reads SGLVKMSAPS…NMQVMGVVMQ (306 aa). Catalysis depends on for 3CL-PRO activity residues His3339 and Cys3446. The next 7 membrane-spanning stretches (helical) occupy residues 3610–3630, 3644–3664, 3669–3689, 3714–3734, 3742–3762, 3791–3811, and 3815–3835; these read ISYG…VSVM, TIPT…MFTV, TFLS…NIVY, RTTH…AIIV, MSNL…YVIG, LAKF…FILP, and LVLL…GVFS. The tract at residues 3610-3835 is HD3; it reads ISYGFMHWLM…MCTMYFGVFS (226 aa). The 83-residue stretch at 3897–3979 folds into the RdRp Nsp7 cofactor domain; sequence SKLTDLKCTS…DLFENSSVLQ (83 aa). One can recognise a RdRp Nsp8 cofactor domain in the interval 3980–4178; sequence ATLTEFSHLA…RASSSAVKLQ (199 aa). The 110-residue stretch at 4179–4288 folds into the Nsp9 ssRNA-binding domain; the sequence is NNEIHPKGLK…GHIAATVRLQ (110 aa). The region spanning 4289-4427 is the ExoN/MTase coactivator domain; that stretch reads AGANTEFASN…DALRNNTVPQ (139 aa). Cys4362, Cys4365, His4371, Cys4378, Cys4404, Cys4407, Cys4415, and Cys4417 together coordinate Zn(2+). 2 zinc fingers span residues 4362 to 4378 and 4404 to 4417; these read CLYC…SGVC and CNVC…GCNC. Residues 4433–4690 enclose the NiRAN domain; sequence FLNRVRGSSV…AAETHKDCDF (258 aa). Residues Asn4638 and Asp4647 each contribute to the Mn(2+) site. The Nsp12 Interface domain occupies 4695 to 4793; it reads IEWLLLEYDY…MNMDVNIHRH (99 aa). 5 residues coordinate Zn(2+): His4724, Cys4730, Cys4735, Cys4739, and Cys4916. The Nsp12 RNA-dependent RNA polymerase domain maps to 4794–5361; the sequence is RLALKELMMY…DLYSSPTTLQ (568 aa). The tract at residues 4796 to 5010 is rdRp Fingers N-ter; the sequence is ALKELMMYAA…HQKMLKSMAA (215 aa). A rdRp Palm N-ter region spans residues 5011 to 5049; the sequence is TRGATCVIGTTKFYGGWDFMLKTLYKDVESPHLMGWDYP. The 163-residue stretch at 5041–5203 folds into the RdRp catalytic domain; the sequence is PHLMGWDYPK…CYNSDYAAKG (163 aa). A rdRp Fingers C-ter region spans residues 5050-5108; the sequence is KCDRAMPNMCRILASLILARKHSTCCTNSDRFYRLANECAQVLSEYVLCGGGYYVKPGG. The Zn(2+) site is built by His5071, Cys5074, and Cys5075. Residues 5109–5244 are rdRp Palm C-ter; that stretch reads TSSGDATTAY…EKGPHEFCSQ (136 aa). Active-site residues include Ser5188, Asp5189, and Asp5190. The rdRp Thumb stretch occupies residues 5245-5361; that stretch reads HTLYIKDGDD…DLYSSPTTLQ (117 aa). One can recognise a CV ZBD domain in the interval 5362–5474; that stretch reads AVGSCVVCHS…MEFNRLATCD (113 aa). Zn(2+) is bound by residues Cys5366, Cys5369, Cys5377, Cys5380, Cys5387, Cys5390, His5394, His5400, Cys5411, Cys5416, Cys5433, and His5436. The (+)RNA virus helicase ATP-binding domain occupies 5618–5799; it reads TVPEEFANHV…MCNLGPDIFL (182 aa). ATP is bound at residue 5643–5650; that stretch reads GPPGTGKS. The region spanning 5800–5974 is the (+)RNA virus helicase C-terminal domain; sequence SVCYRCPKEI…GLFKDCSRED (175 aa). In terms of domain architecture, ExoN spans 6031-6246; sequence LFITRDEAIR…RCLAIYDCFI (216 aa). Catalysis depends on residues Asp6049, Glu6051, and Glu6150. Positions 6166, 6169, 6185, 6188, 6216, 6220, and 6223 each coordinate Zn(2+). Residues His6227 and Asp6232 contribute to the active site. Residue Cys6238 participates in Zn(2+) binding. The N7-MTase domain maps to 6255–6482; sequence YPYISHEQKL…NLWSTFVKVQ (228 aa). 6290–6296 contacts S-adenosyl-L-methionine; it reads DIGNPKG. The segment at 6368 to 6382 is gpppA-binding; sequence CNGGSLYVNKHAFHT. Cys6406, Cys6428, Cys6439, and His6442 together coordinate Zn(2+). Residues 6483-6543 form the Nsp15 N-terminal oligomerization domain; that stretch reads GLENIAFNVI…NVAFELYAKR (61 aa). The region spanning 6544–6665 is the AV-Nsp11N/CoV-Nsp15M domain; that stretch reads AVRSHPDLNL…LYKKVNNEFV (122 aa). The NendoU domain occupies 6682–6821; that stretch reads TALTPMEEDF…KDGKVQTFYP (140 aa). Residues His6712, His6727, Lys6767, Lys6870, Asp6954, Lys6994, and Glu7027 contribute to the active site. In terms of domain architecture, Nidovirus-type SAM-dependent 2'-O-MTase spans 6826–7120; the sequence is TNDWKPGLTM…TLNVSTDVLV (295 aa).

It belongs to the coronaviruses polyprotein 1ab family. In terms of assembly, interacts with host PHB and PHB2. As to quaternary structure, interacts with papain-like protease nsp3 and non-structural protein 6. Monomer. Homodimer. Only the homodimer shows catalytic activity. In terms of assembly, interacts with nsp8 and nsp12 to form the replication-transcription complex (RTC): nsp12, nsp7, two subunits of nsp8, and up to two subunits of nsp13. As to quaternary structure, interacts with nsp7, nsp13 and nsp12 to form the replication-transcription complex (RTC): nsp12, nsp7, two subunits of nsp8, and up to two subunits of nsp13. Interacts with nsp12. In terms of assembly, interacts with proofreading exoribonuclease nsp14 and 2'-O-methyltransferase nsp16; these interactions enhance nsp14 and nsp16 enzymatic activities. As to quaternary structure, interacts with nsp7 and nsp8 to form the replication-transcription complex (RTC): nsp12, nsp7, two subunits of nsp8, and up to two subunits of nsp13. Interacts with nsp9. Interacts with nsp8 to form the replication-transcription complex (RTC): nsp12, nsp7, two subunits of nsp8, and up to two subunits of nsp13. Requires Mn(2+) as cofactor. Mg(2+) serves as cofactor. Post-translationally, specific enzymatic cleavages in vivo by its own proteases yield mature proteins. 3CL-PRO and PL-PRO proteinases are autocatalytically processed.

Its subcellular location is the host membrane. It is found in the host cytoplasm. It localises to the host perinuclear region. The protein localises to the host endoplasmic reticulum-Golgi intermediate compartment. It carries out the reaction ATP + H2O = ADP + phosphate + H(+). The catalysed reaction is RNA(n) + a ribonucleoside 5'-triphosphate = RNA(n+1) + diphosphate. It catalyses the reaction Thiol-dependent hydrolysis of ester, thioester, amide, peptide and isopeptide bonds formed by the C-terminal Gly of ubiquitin (a 76-residue protein attached to proteins as an intracellular targeting signal).. The enzyme catalyses a 5'-end (N(7)-methyl 5'-triphosphoguanosine)-ribonucleoside in mRNA + S-adenosyl-L-methionine = a 5'-end (N(7)-methyl 5'-triphosphoguanosine)-(2'-O-methyl-ribonucleoside) in mRNA + S-adenosyl-L-homocysteine + H(+). It carries out the reaction uridylyl-uridylyl-ribonucleotide-RNA = a 3'-end uridylyl-2',3'-cyclophospho-uridine-RNA + a 5'-end dephospho-ribonucleoside-RNA. The catalysed reaction is a 5'-end diphospho-ribonucleoside in mRNA + GTP + H(+) = a 5'-end (5'-triphosphoguanosine)-ribonucleoside in mRNA + diphosphate. It catalyses the reaction a 5'-end (5'-triphosphoguanosine)-ribonucleoside in mRNA + S-adenosyl-L-methionine = a 5'-end (N(7)-methyl 5'-triphosphoguanosine)-ribonucleoside in mRNA + S-adenosyl-L-homocysteine. The replicase polyprotein of coronaviruses is a multifunctional protein: it contains the activities necessary for the transcription of negative stranded RNA, leader RNA, subgenomic mRNAs and progeny virion RNA as well as proteinases responsible for the cleavage of the polyprotein into functional products. Its function is as follows. Inhibits host translation by interacting with the 40S ribosomal subunit. The nsp1-40S ribosome complex further induces an endonucleolytic cleavage near the 5'UTR of host mRNAs, targeting them for degradation. Viral mRNAs are not susceptible to nsp1-mediated endonucleolytic RNA cleavage thanks to the presence of a 5'-end leader sequence and are therefore protected from degradation. By suppressing host gene expression, nsp1 facilitates efficient viral gene expression in infected cells and evasion from host immune response. In terms of biological role, may play a role in the modulation of host cell survival signaling pathway by interacting with host PHB and PHB2. Indeed, these two proteins play a role in maintaining the functional integrity of the mitochondria and protecting cells from various stresses. Functionally, responsible for the cleavages located at the N-terminus of the replicase polyprotein. In addition, PL-PRO possesses a deubiquitinating/deISGylating activity and processes both 'Lys-48'- and 'Lys-63'-linked polyubiquitin chains from cellular substrates. Participates together with nsp4 in the assembly of virally-induced cytoplasmic double-membrane vesicles necessary for viral replication. Antagonizes innate immune induction of type I interferon by blocking the phosphorylation, dimerization and subsequent nuclear translocation of host IRF3. Also prevents host NF-kappa-B signaling. Participates in the assembly of virally-induced cytoplasmic double-membrane vesicles necessary for viral replication. Its function is as follows. Cleaves the C-terminus of replicase polyprotein at 11 sites. Recognizes substrates containing the core sequence [ILMVF]-Q-|-[SGACN]. Also able to bind an ADP-ribose-1''-phosphate (ADRP). In terms of biological role, plays a role in the initial induction of autophagosomes from host endoplasmic reticulum. Later, limits the expansion of these phagosomes that are no longer able to deliver viral components to lysosomes. Functionally, forms a hexadecamer with nsp8 (8 subunits of each) that may participate in viral replication by acting as a primase. Alternatively, may synthesize substantially longer products than oligonucleotide primers. Forms a hexadecamer with nsp7 (8 subunits of each) that may participate in viral replication by acting as a primase. Alternatively, may synthesize substantially longer products than oligonucleotide primers. Its function is as follows. Forms a primer, NSP9-pU, which is utilized by the polymerase for the initiation of RNA chains. Interacts with ribosome signal recognition particle RNA (SRP). Together with NSP8, suppress protein integration into the cell membrane, thereby disrupting host immune defenses. In terms of biological role, plays a pivotal role in viral transcription by stimulating both nsp14 3'-5' exoribonuclease and nsp16 2'-O-methyltransferase activities. Therefore plays an essential role in viral mRNAs cap methylation. Functionally, RNA-directed RNA polymerase that catalyzes the transcription of viral genomic and subgenomic RNAs. Acts in complex with nsp7 and nsp8 to transcribe both the minus and positive strands of genomic RNA. The kinase-like NiRAN domain of NSP12 attaches one or more nucleotides to the amino terminus of NSP9, forming a covalent RNA-protein intermediate that serves as transcription/replication primer. Subgenomic RNAs (sgRNAs) are formed by discontinuous transcription: The polymerase has the ability to pause at transcription-regulating sequences (TRS) and jump to the leader TRS, resulting in a major deletion. This creates a series of subgenomic RNAs that are replicated, transcribed and translated. In addition, Nsp12 is a subunit of the viral RNA capping enzyme that catalyzes the RNA guanylyltransferase reaction for genomic and sub-genomic RNAs. Subsequently, the NiRAN domain transfers RNA to GDP, and forms the core cap structure GpppA-RNA. Multi-functional protein with a zinc-binding domain in N-terminus displaying RNA and DNA duplex-unwinding activities with 5' to 3' polarity. Activity of helicase is dependent on magnesium. Its function is as follows. Plays a role in viral RNA synthesis through two distinct activities. The N7-guanine methyltransferase activity plays a role in the formation of the cap structure GpppA-RNA. The proofreading exoribonuclease reduces the sensitivity of the virus to RNA mutagens during replication. This activity acts on both ssRNA and dsRNA in a 3'-5' direction. In terms of biological role, plays a role in viral transcription/replication and prevents the simultaneous activation of host cell dsRNA sensors, such as MDA5/IFIH1, OAS, and PKR. Acts by degrading the 5'-polyuridines generated during replication of the poly(A) region of viral genomic and subgenomic RNAs. Catalyzes a two-step reaction in which a 2'3'-cyclic phosphate (2'3'-cP) is first generated by 2'-O transesterification, which is then hydrolyzed to a 3'-phosphate (3'-P). If not degraded, poly(U) RNA would hybridize with poly(A) RNA tails and activate host dsRNA sensors. Functionally, methyltransferase that mediates mRNA cap 2'-O-ribose methylation to the 5'-cap structure of viral mRNAs. N7-methyl guanosine cap is a prerequisite for binding of nsp16. Therefore plays an essential role in viral mRNAs cap methylation which is essential to evade immune system. The sequence is that of Replicase polyprotein 1ab (rep) from Bat coronavirus 133/2005 (BtCoV).